Here is a 420-residue protein sequence, read N- to C-terminus: Glutamate dehydrogenase (420 aa).

Lysine 105 is a catalytic residue. Residue 220–226 (GYGNAGY) participates in NAD(+) binding.

The protein belongs to the Glu/Leu/Phe/Val dehydrogenases family. As to quaternary structure, homohexamer.

The protein resides in the cytoplasm. It carries out the reaction L-glutamate + NAD(+) + H2O = 2-oxoglutarate + NH4(+) + NADH + H(+). The catalysed reaction is L-glutamate + NADP(+) + H2O = 2-oxoglutarate + NH4(+) + NADPH + H(+). The polypeptide is Glutamate dehydrogenase (gdhA) (Pyrococcus furiosus (strain ATCC 43587 / DSM 3638 / JCM 8422 / Vc1)).